Here is a 602-residue protein sequence, read N- to C-terminus: Elongation factor 4 (602 aa).

Residues 7–189 (NNIRNFSIIA…RILTAVPPPQ (183 aa)) form the tr-type G domain. GTP is bound by residues 19–24 (DHGKST) and 136–139 (NKID).

Belongs to the TRAFAC class translation factor GTPase superfamily. Classic translation factor GTPase family. LepA subfamily.

The protein localises to the cell inner membrane. It catalyses the reaction GTP + H2O = GDP + phosphate + H(+). Functionally, required for accurate and efficient protein synthesis under certain stress conditions. May act as a fidelity factor of the translation reaction, by catalyzing a one-codon backward translocation of tRNAs on improperly translocated ribosomes. Back-translocation proceeds from a post-translocation (POST) complex to a pre-translocation (PRE) complex, thus giving elongation factor G a second chance to translocate the tRNAs correctly. Binds to ribosomes in a GTP-dependent manner. This chain is Elongation factor 4, found in Protochlamydia amoebophila (strain UWE25).